A 610-amino-acid chain; its full sequence is UvrABC system protein C (610 aa).

A GIY-YIG domain is found at 16-94 (SQPGVYRMYD…IKLYQPRYNV (79 aa)). In terms of domain architecture, UVR spans 204 to 239 (DQVLTQLISRMETASQNLEFEEAARIRDQIQAVRRV).

It belongs to the UvrC family. As to quaternary structure, interacts with UvrB in an incision complex.

It is found in the cytoplasm. Functionally, the UvrABC repair system catalyzes the recognition and processing of DNA lesions. UvrC both incises the 5' and 3' sides of the lesion. The N-terminal half is responsible for the 3' incision and the C-terminal half is responsible for the 5' incision. The chain is UvrABC system protein C from Escherichia coli (strain SMS-3-5 / SECEC).